A 154-amino-acid polypeptide reads, in one-letter code: 3-dehydroquinate dehydratase (154 aa).

The active-site Proton acceptor is the Tyr-23. Asn-75, His-81, and Asp-88 together coordinate substrate. The active-site Proton donor is His-101. Substrate contacts are provided by residues 102-103 and Arg-112; that span reads LS.

This sequence belongs to the type-II 3-dehydroquinase family. In terms of assembly, homododecamer.

It catalyses the reaction 3-dehydroquinate = 3-dehydroshikimate + H2O. The protein operates within metabolic intermediate biosynthesis; chorismate biosynthesis; chorismate from D-erythrose 4-phosphate and phosphoenolpyruvate: step 3/7. In terms of biological role, catalyzes a trans-dehydration via an enolate intermediate. This chain is 3-dehydroquinate dehydratase, found in Teredinibacter turnerae (strain ATCC 39867 / T7901).